We begin with the raw amino-acid sequence, 309 residues long: Ribosomal RNA small subunit methyltransferase H (309 aa).

S-adenosyl-L-methionine-binding positions include 36–38, Asp-55, Phe-81, Asp-102, and Gln-109; that span reads AGH.

It belongs to the methyltransferase superfamily. RsmH family.

It is found in the cytoplasm. The enzyme catalyses cytidine(1402) in 16S rRNA + S-adenosyl-L-methionine = N(4)-methylcytidine(1402) in 16S rRNA + S-adenosyl-L-homocysteine + H(+). Specifically methylates the N4 position of cytidine in position 1402 (C1402) of 16S rRNA. The chain is Ribosomal RNA small subunit methyltransferase H from Mycoplasma genitalium (strain ATCC 33530 / DSM 19775 / NCTC 10195 / G37) (Mycoplasmoides genitalium).